Here is a 199-residue protein sequence, read N- to C-terminus: Hematopoietic prostaglandin D synthase (199 aa).

The region spanning 2–79 (PNYKLLYFNM…YLTKNTDLAG (78 aa)) is the GST N-terminal domain. Glutathione contacts are provided by residues Tyr-8, Arg-14, Trp-39, 49–51 (GKI), and 63–64 (QS). Positions 81 to 199 (TELEQCQVDA…WILKRPQTKL (119 aa)) constitute a GST C-terminal domain.

It belongs to the GST superfamily. Sigma family. In terms of assembly, homodimer. Glutathione serves as cofactor. As to expression, highly expressed in spleen and bone marrow. Lower levels of expression in small intestine, colon, liver, pancreas and skin. Not detected in brain, heart, lung or kidney (at protein level).

Its subcellular location is the cytoplasm. It catalyses the reaction prostaglandin H2 = prostaglandin D2. The catalysed reaction is RX + glutathione = an S-substituted glutathione + a halide anion + H(+). It carries out the reaction 2-glyceryl-prostaglandin H2 = 2-glyceryl-prostaglandin D2. In terms of biological role, bifunctional enzyme which catalyzes both the conversion of PGH2 to PGD2, a prostaglandin involved in smooth muscle contraction/relaxation and a potent inhibitor of platelet aggregation, and the conjugation of glutathione with a wide range of aryl halides and organic isothiocyanates. Also exhibits low glutathione-peroxidase activity towards cumene hydroperoxide. The protein is Hematopoietic prostaglandin D synthase of Rattus norvegicus (Rat).